The chain runs to 154 residues: Major allergen Dau c 1 (154 aa).

It belongs to the BetVI family. In terms of assembly, homodimer.

This Daucus carota (Wild carrot) protein is Major allergen Dau c 1.